Reading from the N-terminus, the 876-residue chain is MSHHKKRVYPQAQVPYIASMPIVAEQQQSQQQIDQTAYAMGNLQLNNRANSFTQLAQNQQFPGSGKVVNQLYPVDLFTELPPPIRDLSLPPLPITISQDNIVTPSEYSNVPYQYVRSTLKAVPKTNSLLKKTKLPFAIVIRPYLHLQDSDNQVPLNTDGVIVRCRRCRSYMNPFVVFINQGRKWQCNICRFKNDVPFGFDQNLQGAPINRYERNEIKNSVVDYLAPVEYSVREPPPSVYVFLLDVSQNAVKNGLLATSARTILENIEFLPNHDGRTRIAIICVDHSLHYFYVPLDDDYEVSDEDDEESDGEEEDEDEEEEDVDNSETIQMFDIGDLDEPFLPMPSDELVVPLKYCKNNLETLLKKIPEIFQDTHSSKFALGPALKAASNLIKSTGGKVEVISSTLPNTGIGKLKKRSEQGILNTPKESSQLLSCKDSFYKTFTIECNKLQITVDMFLASEDYMDVATLSHLGRFSGGQTHFYPGFNATSLNDVTKFTRELSRHLSMDISMEAVMRVRCSTGLRATSFFGHFFNRSSDLCAFSTMPRDQSYLFGISIEDSLMAEYCYLQVSTLLTLNTGERRIRVMTLALPTSESAREVFASADQLAITDFMTQNAVTKALNSSMYSARDFITKSLEDILNAYKKEISMSNINSVTSLNLCANLRMLPLLMNGLSKHIALRPGVVPSDYRASALNRLETEPLHYLIKSIYPTVYSLHDMPDEVGLPDFEGKTVLPEPINATISLFERYGLYLIDNSAELFLWVGGDAVPELLIDVFNTDTISQIPVGKSELPLLNDSPFNERLRRIIGRIRENNDTITFQSLYIIRGPSINEPANLNSEKDMASLRLWVLSTLVEDKVLNCASYREYLQSMKTSINR.

Ser51 carries the post-translational modification Phosphoserine. Residues 164-189 form a zinc finger-like region; that stretch reads CRRCRSYMNPFVVFINQGRKWQCNIC. The span at 300 to 324 shows a compositional bias: acidic residues; that stretch reads VSDEDDEESDGEEEDEDEEEEDVDN. The tract at residues 300–326 is disordered; that stretch reads VSDEDDEESDGEEEDEDEEEEDVDNSE.

It belongs to the SEC23/SEC24 family. SEC24 subfamily. As to quaternary structure, COPII is composed of at least five proteins: the SEC23/24 complex, the SEC13/31 complex and SAR1. Interacts with GRH1.

The protein resides in the cytoplasm. It is found in the golgi apparatus membrane. It localises to the endoplasmic reticulum membrane. In terms of biological role, component of the COPII coat, that covers ER-derived vesicles involved in transport from the endoplasmic reticulum to the Golgi apparatus. COPII acts in the cytoplasm to promote the transport of secretory, plasma membrane, and vacuolar proteins from the endoplasmic reticulum to the Golgi complex. The polypeptide is SED5-binding protein 2 (SFB2) (Saccharomyces cerevisiae (strain ATCC 204508 / S288c) (Baker's yeast)).